An 879-amino-acid polypeptide reads, in one-letter code: Paramyosin, long form (879 aa).

The segment at methionine 1–isoleucine 31 is nonhelical region. The residue at position 18 (serine 18) is a Phosphoserine. Residues glutamine 32–valine 858 adopt a coiled-coil conformation. Positions threonine 859–glutamate 879 are nonhelical region.

Belongs to the paramyosin family. Heterodimer of two isoforms. The more-acidic and less-abundant isoform is phosphorylated. In terms of tissue distribution, expressed in all larval and adult muscle tissues. Expression is five times higher in tubular than in fibrillar muscles.

It localises to the cytoplasm. It is found in the myofibril. In terms of biological role, paramyosin is a major structural component of many thick filaments isolated from invertebrate muscles. The chain is Paramyosin, long form (Prm) from Drosophila melanogaster (Fruit fly).